An 86-amino-acid polypeptide reads, in one-letter code: MFGYRSLLVLLVTLSLCLLLQSSHCSAVRTYGNDLDARARREIISLAARLIKLSMYGPEDDSFVKRNGGTADALYNLPDLEKIGKR.

A signal peptide spans 1 to 27 (MFGYRSLLVLLVTLSLCLLLQSSHCSA). Residues 28–64 (VRTYGNDLDARARREIISLAARLIKLSMYGPEDDSFV) constitute a propeptide that is removed on maturation. Isoleucine 83 is subject to Isoleucine amide.

In terms of tissue distribution, expressed only in cerebral ganglion.

It is found in the secreted. Functionally, may function as a hormone and may play a neuromodulatory role. The protein is Cerebrin prohormone (CBPH) of Aplysia californica (California sea hare).